Reading from the N-terminus, the 173-residue chain is RNA pyrophosphohydrolase (173 aa).

The 144-residue stretch at 6-149 (GFRANVGIIL…KRGVYRRALR (144 aa)) folds into the Nudix hydrolase domain. A Nudix box motif is present at residues 38–59 (GGIDEGETPLDAMYRELWEEVG).

It belongs to the Nudix hydrolase family. RppH subfamily. Requires a divalent metal cation as cofactor.

Accelerates the degradation of transcripts by removing pyrophosphate from the 5'-end of triphosphorylated RNA, leading to a more labile monophosphorylated state that can stimulate subsequent ribonuclease cleavage. The protein is RNA pyrophosphohydrolase of Psychrobacter sp. (strain PRwf-1).